A 91-amino-acid polypeptide reads, in one-letter code: Elongation factor 1-beta (91 aa).

Belongs to the EF-1-beta/EF-1-delta family.

Promotes the exchange of GDP for GTP in EF-1-alpha/GDP, thus allowing the regeneration of EF-1-alpha/GTP that could then be used to form the ternary complex EF-1-alpha/GTP/AAtRNA. The protein is Elongation factor 1-beta of Thermococcus gammatolerans (strain DSM 15229 / JCM 11827 / EJ3).